We begin with the raw amino-acid sequence, 424 residues long: Chloroquine resistance transporter (424 aa).

The Cytoplasmic portion of the chain corresponds to 1-58 (MKFASKKNNQKNSSKNDERYRELDNLVQEGNGSRLGGGSCLGKCAHVFKLIFKEIKDN). The chain crosses the membrane as a helical span at residues 59 to 79 (IFIYILSIIYLSVCVMNKIFA). The Vacuolar segment spans residues 80 to 90 (KRTLNKIGNYS). N88 carries an N-linked (GlcNAc...) asparagine glycan. The chain crosses the membrane as a helical span at residues 91 to 111 (FVTSETHNFICMIMFFIVYSL). Residues 112 to 127 (FGNKKGNSKERHRSFN) are Cytoplasmic-facing. A helical transmembrane segment spans residues 128–148 (LQFFAISMLDACSVILAFIGL). Over 149–154 (TRTTGN) the chain is Vacuolar. The helical transmembrane segment at 155–175 (IQSFVLQLSIPINMFFCFLIL) threads the bilayer. The Cytoplasmic segment spans residues 176 to 178 (RYR). The chain crosses the membrane as a helical span at residues 179 to 199 (YHLYNYLGAVIIVVTIALVEM). Topologically, residues 200-209 (KLSFETQEEN) are vacuolar. The chain crosses the membrane as a helical span at residues 210–230 (SIIFNLVLISALIPVCFSNMT). The Cytoplasmic segment spans residues 231–248 (REIVFKKYKIDILRLNAM). A helical membrane pass occupies residues 249-269 (VSFFQLFTSCLILPVYTLPFL). The Vacuolar portion of the chain corresponds to 270 to 317 (KQLHLPYNEIWTNIKNGFACLFLGRNTVVENCGLGMAKLCDDCDGAWK). Intrachain disulfides connect C289-C312 and C301-C309. Residues 318–338 (TFALFSFFNICDNLITSYIID) traverse the membrane as a helical segment. Over 339-346 (KFSTMTYT) the chain is Cytoplasmic. Residues 347-367 (IVSCIQGPAIAIAYYFKFLAG) form a helical membrane-spanning segment. The Vacuolar portion of the chain corresponds to 368-377 (DVVREPRLLD). The chain crosses the membrane as a helical span at residues 378-398 (FVTLFGYLFGSIIYRVGNIIL). At 399 to 424 (ERKKMRNEENEDSEGELTNVDSIITQ) the chain is on the cytoplasmic side.

Belongs to the CRT-like transporter family. In terms of assembly, monomer.

The protein resides in the vacuole membrane. The enzyme catalyses L-arginine(in) = L-arginine(out). It carries out the reaction L-lysine(in) = L-lysine(out). It catalyses the reaction L-histidine(out) = L-histidine(in). The catalysed reaction is histamine(out) = histamine(in). The enzyme catalyses spermidine(in) = spermidine(out). It carries out the reaction Fe(3+)(in) = Fe(3+)(out). It catalyses the reaction Fe(2+)(in) = Fe(2+)(out). With respect to regulation, transporter activity is trans-stimulated by host-derived peptides containing 4-11 amino acids. Trans-stimulation by hemoglobin-derived peptide VDPVNF is pH-dependent and sodium-independent. Saquinavir trans-stimulates transport of hemoglobin-derived peptide VDPVNF. Protons are non-competitive inhibitors of chloroquine transport. Nutrient transporter. Substrate transport is pH-dependent. Can transport arginine, lysine, histidine, peptides, histamine and spermidine. May modulate activity of endogenous transporters. Involved in maintaining the osmotic homeostasis of the digestive vacuole. Required for the asexual intraerythrocytic proliferation of parasites. Can transport Fe(2+) and Fe(3+). The sequence is that of Chloroquine resistance transporter from Plasmodium falciparum.